The following is a 435-amino-acid chain: D-inositol 3-phosphate glycosyltransferase (435 aa).

His25 contacts 1D-myo-inositol 3-phosphate. UDP-N-acetyl-alpha-D-glucosamine-binding positions include Gln31 to Pro32 and Gly39. 1D-myo-inositol 3-phosphate-binding positions include Asp36–Asn41, Lys94, Tyr127, Thr151, and Arg171. 2 residues coordinate UDP-N-acetyl-alpha-D-glucosamine: Arg245 and Lys250. Mg(2+) contacts are provided by Tyr320, Arg321, and Ala323. Glu333 and Glu341 together coordinate UDP-N-acetyl-alpha-D-glucosamine. Residue Thr347 coordinates Mg(2+).

This sequence belongs to the glycosyltransferase group 1 family. MshA subfamily. As to quaternary structure, homodimer.

It catalyses the reaction 1D-myo-inositol 3-phosphate + UDP-N-acetyl-alpha-D-glucosamine = 1D-myo-inositol 2-acetamido-2-deoxy-alpha-D-glucopyranoside 3-phosphate + UDP + H(+). Functionally, catalyzes the transfer of a N-acetyl-glucosamine moiety to 1D-myo-inositol 3-phosphate to produce 1D-myo-inositol 2-acetamido-2-deoxy-glucopyranoside 3-phosphate in the mycothiol biosynthesis pathway. The polypeptide is D-inositol 3-phosphate glycosyltransferase (Streptosporangium roseum (strain ATCC 12428 / DSM 43021 / JCM 3005 / KCTC 9067 / NCIMB 10171 / NRRL 2505 / NI 9100)).